The primary structure comprises 157 residues: RNA pyrophosphohydrolase (157 aa).

The Nudix hydrolase domain occupies S6–D149. Residues G43–G64 carry the Nudix box motif.

The protein belongs to the Nudix hydrolase family. RppH subfamily. A divalent metal cation is required as a cofactor.

Functionally, accelerates the degradation of transcripts by removing pyrophosphate from the 5'-end of triphosphorylated RNA, leading to a more labile monophosphorylated state that can stimulate subsequent ribonuclease cleavage. The chain is RNA pyrophosphohydrolase from Sulfurovum sp. (strain NBC37-1).